Reading from the N-terminus, the 358-residue chain is Beta-lactamase (358 aa).

Residue Ser-60 is the Acyl-ester intermediate of the active site. Catalysis depends on Tyr-146, which acts as the Proton acceptor. Residue 311 to 313 (KTG) coordinates substrate.

This sequence belongs to the class-C beta-lactamase family.

The protein localises to the periplasm. The catalysed reaction is a beta-lactam + H2O = a substituted beta-amino acid. Its function is as follows. This protein is a serine beta-lactamase with a substrate specificity for cephalosporins. This is Beta-lactamase from Pseudomonas fluorescens.